Reading from the N-terminus, the 486-residue chain is Protein nucleotidyltransferase YdiU (486 aa).

Positions 90, 92, 93, 113, 125, 126, 176, and 183 each coordinate ATP. Residue D252 is the Proton acceptor of the active site. Positions 253 and 262 each coordinate Mg(2+). D262 is an ATP binding site.

It belongs to the SELO family. Mg(2+) is required as a cofactor. Requires Mn(2+) as cofactor.

The catalysed reaction is L-seryl-[protein] + ATP = 3-O-(5'-adenylyl)-L-seryl-[protein] + diphosphate. It catalyses the reaction L-threonyl-[protein] + ATP = 3-O-(5'-adenylyl)-L-threonyl-[protein] + diphosphate. It carries out the reaction L-tyrosyl-[protein] + ATP = O-(5'-adenylyl)-L-tyrosyl-[protein] + diphosphate. The enzyme catalyses L-histidyl-[protein] + UTP = N(tele)-(5'-uridylyl)-L-histidyl-[protein] + diphosphate. The catalysed reaction is L-seryl-[protein] + UTP = O-(5'-uridylyl)-L-seryl-[protein] + diphosphate. It catalyses the reaction L-tyrosyl-[protein] + UTP = O-(5'-uridylyl)-L-tyrosyl-[protein] + diphosphate. Functionally, nucleotidyltransferase involved in the post-translational modification of proteins. It can catalyze the addition of adenosine monophosphate (AMP) or uridine monophosphate (UMP) to a protein, resulting in modifications known as AMPylation and UMPylation. The polypeptide is Protein nucleotidyltransferase YdiU (Pseudomonas putida (strain GB-1)).